The chain runs to 831 residues: DNA ligase (831 aa).

Residues Asp34–Asp38, Ser83–Leu84, and Glu114 contribute to the NAD(+) site. The active-site N6-AMP-lysine intermediate is Lys116. The NAD(+) site is built by Arg137, Glu174, Lys291, and Lys315. 4 residues coordinate Zn(2+): Cys409, Cys412, Cys427, and Cys433. In terms of domain architecture, BRCT spans Ala749–Gln831.

Belongs to the NAD-dependent DNA ligase family. LigA subfamily. Mg(2+) serves as cofactor. The cofactor is Mn(2+).

The enzyme catalyses NAD(+) + (deoxyribonucleotide)n-3'-hydroxyl + 5'-phospho-(deoxyribonucleotide)m = (deoxyribonucleotide)n+m + AMP + beta-nicotinamide D-nucleotide.. Its function is as follows. DNA ligase that catalyzes the formation of phosphodiester linkages between 5'-phosphoryl and 3'-hydroxyl groups in double-stranded DNA using NAD as a coenzyme and as the energy source for the reaction. It is essential for DNA replication and repair of damaged DNA. This is DNA ligase from Xylella fastidiosa (strain 9a5c).